We begin with the raw amino-acid sequence, 566 residues long: Malate synthase, glyoxysomal (566 aa).

The active-site Proton acceptor is Arg182. Asp467 (proton donor) is an active-site residue. The Microbody targeting signal motif lies at 564–566; the sequence is SRL.

Belongs to the malate synthase family.

It localises to the glyoxysome. It catalyses the reaction glyoxylate + acetyl-CoA + H2O = (S)-malate + CoA + H(+). The protein operates within carbohydrate metabolism; glyoxylate cycle; (S)-malate from isocitrate: step 2/2. In Cucurbita maxima (Pumpkin), this protein is Malate synthase, glyoxysomal.